Reading from the N-terminus, the 599-residue chain is Kinesin light chain 2 (599 aa).

Residues 78 to 143 adopt a coiled-coil conformation; it reads ILALSSHLGA…KQHLLFMSQI (66 aa). Residues 154-163 are compositionally biased toward basic and acidic residues; that stretch reads EKGDVPKDSL. Residues 154-188 are disordered; sequence EKGDVPKDSLDDLFPNEDEQSPAPSPGGGDVAAQH. Residues Ser-174 and Ser-178 each carry the phosphoserine modification. 5 TPR repeats span residues 197–230, 239–272, 281–314, 323–356, and 365–398; these read LRTL…LEKT, ATML…REKT, AATL…REKV, AKQL…YATR, and AKTK…AHEK. Ser-443 is modified (phosphoserine). Residues 447–480 form a TPR 6 repeat; it reads NTTLRTLGALYRPEGKLEAAHTLEDCASRSRKQG. Residues 492 to 541 are disordered; that stretch reads LLKDGSGRGHRRGSRDVAGPQSESDLEESGPAAEWSGDGSGSLRRSGSFG. Ser-505 and Ser-515 each carry phosphoserine. Low complexity predominate over residues 532–541; the sequence is GSLRRSGSFG. Residues Ser-574, Ser-575, and Ser-582 each carry the phosphoserine modification.

The protein belongs to the kinesin light chain family. Oligomeric complex composed of two heavy chains and two light chains. Interacts (via TPR repeats) with PLEKHM2.

It localises to the cytoplasm. It is found in the cytoskeleton. Its subcellular location is the lysosome membrane. Kinesin is a microtubule-associated force-producing protein that plays a role in organelle transport. The light chain functions in coupling of cargo to the heavy chain or in the modulation of its ATPase activity. Through binding with PLEKHM2 and ARL8B, recruits kinesin-1 to lysosomes and hence direct lysosomes movement toward microtubule plus ends. This chain is Kinesin light chain 2, found in Mus musculus (Mouse).